We begin with the raw amino-acid sequence, 623 residues long: Sodium-coupled monocarboxylate transporter 2 (623 aa).

The Extracellular portion of the chain corresponds to 1–10; sequence METVGRFQAG. A helical membrane pass occupies residues 11 to 31; that stretch reads DYVVFACLFVVSSGIGVFFAI. The Cytoplasmic portion of the chain corresponds to 32–50; the sequence is KERNKAPSKEFLVGGRQMS. Residues 51–71 form a helical membrane-spanning segment; sequence CGPVALSLTASFMSAVTVIGA. Over 72–83 the chain is Extracellular; it reads PADVYRFGASYV. The chain crosses the membrane as a helical span at residues 84 to 104; the sequence is IFGVAYTFVVFFTAELFLPVF. Residues 105-129 are Cytoplasmic-facing; the sequence is YRSGITSTYEYLELRFCKLVRVAAT. A helical membrane pass occupies residues 130–150; that stretch reads LIYIIQTILYTGVVVYAPALA. Over 151–158 the chain is Extracellular; it reads LNQVTGFD. The helical transmembrane segment at 159–179 threads the bilayer; the sequence is LWGSIFATGIVCTFYCTLGGL. At 180–181 the chain is on the cytoplasmic side; it reads KA. The chain crosses the membrane as a helical span at residues 182–202; it reads VVWTDAFQMVVMVVGFLTVLI. The Extracellular portion of the chain corresponds to 203 to 236; sequence QGSSRAGGIENVWSTSRTGGRLQVFDFDVSPLRR. A helical membrane pass occupies residues 237–257; sequence HTFWTLSVGGTFTWLGIYGVN. Over 258-276 the chain is Cytoplasmic; sequence QSTIQRCISCKTEGHARWA. A helical membrane pass occupies residues 277–297; it reads LYLNLLGLWIILFCAVVSGLI. Over 298 to 322 the chain is Extracellular; sequence MYSYYSHCDPWSSGLISAPDQLMPY. Residues 323–343 traverse the membrane as a helical segment; that stretch reads FVMEILGAFPGLPGLFVACAF. Over 344 to 386 the chain is Cytoplasmic; sequence SGTLSTVAASINALATVMYEDFVSQCFPDLSNRAASWISKALC. A helical membrane pass occupies residues 387–407; that stretch reads VAFGVACTTMAVAASYMGGIV. Residues 408–412 are Extracellular-facing; that stretch reads QAALS. The chain crosses the membrane as a helical span at residues 413–433; it reads IHGMCGGPVLGLFSLGILFPF. Over 434 to 438 the chain is Cytoplasmic; that stretch reads TNLKG. Residues 439–459 form a helical membrane-spanning segment; that stretch reads AVGGLIVGISLSFWVGVGAFI. At 460-510 the chain is on the extracellular side; sequence YPAPSNNTHALELNTAGCNITAAAFEPTSATVTQLTSDRNWLADSWYSMSY. N-linked (GlcNAc...) asparagine glycosylation is found at Asn-465 and Asn-478. Residues 511–531 form a helical membrane-spanning segment; that stretch reads LYYSAVGFIGTVAAGLLITLL. Topologically, residues 532–623 are cytoplasmic; that stretch reads TGPMDPKLLK…NETSIVQKKL (92 aa).

The protein belongs to the sodium:solute symporter (SSF) (TC 2.A.21) family.

The protein localises to the apical cell membrane. The catalysed reaction is (S)-lactate(out) + Na(+)(out) = (S)-lactate(in) + Na(+)(in). The enzyme catalyses nicotinate(out) + Na(+)(out) = nicotinate(in) + Na(+)(in). It catalyses the reaction pyruvate(out) + Na(+)(out) = pyruvate(in) + Na(+)(in). It carries out the reaction propanoate(out) + Na(+)(out) = propanoate(in) + Na(+)(in). The catalysed reaction is butanoate(out) + Na(+)(out) = butanoate(in) + Na(+)(in). The enzyme catalyses acetoacetate(out) + Na(+)(out) = acetoacetate(in) + Na(+)(in). Acts as an electroneutral and low-affinity sodium (Na(+))-dependent sodium-coupled solute transporter. Catalyzes the transport across the plasma membrane of many monocarboxylates such as lactate, pyruvate, nicotinate, propionate, butyrate and beta-D-hydroxybutyrate. This Danio rerio (Zebrafish) protein is Sodium-coupled monocarboxylate transporter 2 (slc5a12).